We begin with the raw amino-acid sequence, 56 residues long: Ovomucoid (56 aa).

The 51-residue stretch at 6–56 (VDCSEYPKPDCTLEYRPLCGSDNKTYASKCNFCNAVVESNGTLTLSHFGKC) folds into the Kazal-like domain. 3 disulfides stabilise this stretch: C8/C38, C16/C35, and C24/C56. N-linked (GlcNAc...) asparagine glycosylation occurs at N45.

It localises to the secreted. The protein is Ovomucoid of Callipepla squamata pallida (Blue scaled quail).